Reading from the N-terminus, the 526-residue chain is Probable carboxypeptidase 2 (526 aa).

The N-terminal stretch at 1–21 is a signal peptide; sequence MVAYRLLALISLGLGSHCASA. N-linked (GlcNAc...) asparagine glycosylation is present at Asn46. Positions 53-76 are disordered; that stretch reads PAFTSPGTVPRGFSDGTSGPTRDE. Residues 71 to 351 enclose the Peptidase M14 domain; sequence GPTRDETMEG…VMAKSILQTA (281 aa). A glycan (N-linked (GlcNAc...) asparagine) is linked at Asn116. 3 residues coordinate Zn(2+): His136, Glu139, and His224. Residue Glu322 is the Proton donor/acceptor of the active site. 2 N-linked (GlcNAc...) asparagine glycosylation sites follow: Asn393 and Asn459.

Belongs to the peptidase M14 family. Zn(2+) is required as a cofactor.

Its subcellular location is the secreted. Functionally, extracellular metalloprotease that contributes to pathogenicity. This chain is Probable carboxypeptidase 2 (MCPB), found in Arthroderma benhamiae (strain ATCC MYA-4681 / CBS 112371) (Trichophyton mentagrophytes).